We begin with the raw amino-acid sequence, 40 residues long: Peroxisomal LYS1 stabilizing protein 1 (40 aa).

Residues 1-10 (MTAKTKQSWN) are compositionally biased toward polar residues. Residues 1–20 (MTAKTKQSWNKGIWENGKQG) are disordered.

The protein localises to the cytoplasm. It is found in the cytosol. It localises to the peroxisome matrix. Functionally, modulates the lysine biosynthesis pathway, possibly by stabilizing the lysine biosynthesis LYS1 protein in lysine-deplete conditions. This Saccharomyces cerevisiae (strain ATCC 204508 / S288c) (Baker's yeast) protein is Peroxisomal LYS1 stabilizing protein 1.